The sequence spans 272 residues: Dickkopf-related protein 1 (272 aa).

A signal peptide spans 1–31; sequence MMVVCAAAAVRFLAVFTMMALCSLPLLGASA. S62 carries an O-linked (GalNAc...) serine glycan. 10 cysteine pairs are disulfide-bonded: C86/C98, C92/C114, C117/C131, C124/C136, C130/C141, C195/C207, C201/C216, C206/C243, C226/C251, and C245/C269. The segment at 86 to 141 is DKK-type Cys-1; the sequence is CAEDEECGSDEYCSSPSRGAAGVGGVQICLACRKRRKRCMRHAMCCPGNYCKNGIC. A DKK-type Cys-2 region spans residues 195 to 269; that stretch reads CLRSSDCAAG…ASNSSRLHTC (75 aa). N-linked (GlcNAc...) asparagine glycosylation occurs at N262.

The protein belongs to the dickkopf family. In terms of assembly, interacts (via the C-terminal Cys-rich domain) with LRP5 (via beta-propeller regions 3 and 4); the interaction, enhanced by MESD and or KREMEN, antagonizes Wnt-mediated signaling. Interacts with LRP6. Forms a ternary complex with LRP6 and KREM1. Interacts with KREM1.

It is found in the secreted. Functionally, antagonizes canonical Wnt signaling by inhibiting LRP5/6 interaction with Wnt and by forming a ternary complex with the transmembrane protein KREMEN that promotes internalization of LRP5/6. Inhibits the pro-apoptotic function of KREMEN1 in a Wnt-independent manner, and has anti-apoptotic activity. Plays a role in limb development; attenuates Wnt signaling in the developing limb to allow normal limb patterning. This Mus musculus (Mouse) protein is Dickkopf-related protein 1 (Dkk1).